Reading from the N-terminus, the 973-residue chain is Sodium/calcium exchanger 1 (973 aa).

An N-terminal signal peptide occupies residues 1-35 (MYNMRRLSLSPTFSMGFHLLVTVSLLFSHVDHVIA). The Extracellular segment spans residues 36–74 (ETEMEGEGNETGECTGSYYCKKGVILPIWEPQDPSFGDK). The N-linked (GlcNAc...) asparagine glycan is linked to asparagine 44. The helical transmembrane segment at 75 to 95 (IARATVYFVAMVYMFLGVSII) threads the bilayer. The Cytoplasmic portion of the chain corresponds to 96-136 (ADRFMSSIEVITSQEKEITIKKPNGETTKTTVRIWNETVSN). Residues 137 to 157 (LTLMALGSSAPEILLSVIEVC) form a helical membrane-spanning segment. Residues 141–181 (ALGSSAPEILLSVIEVCGHNFTAGDLGPSTIVGSAAFNMFI) form an Alpha-1 repeat. Residues 158–170 (GHNFTAGDLGPST) lie on the Extracellular side of the membrane. Asparagine 160 carries an N-linked (GlcNAc...) asparagine glycan. The chain crosses the membrane as a helical span at residues 171-191 (IVGSAAFNMFIIIALCVYVVP). Residues 192 to 204 (DGETRKIKHLRVF) lie on the Cytoplasmic side of the membrane. A helical membrane pass occupies residues 205–225 (FVTAAWSIFAYTWLYIILSVI). Topologically, residues 226–231 (SPGVVE) are extracellular. A helical membrane pass occupies residues 232–252 (VWEGLLTFFFFPICVVFAWVA). The Cytoplasmic portion of the chain corresponds to 253-800 (DRRLLFYKYV…FVPPTEYWNG (548 aa)). Residues 254-273 (RRLLFYKYVYKRYRAGKQRG) form a putative calmodulin-binding region region. 2 positions are modified to phosphoserine: serine 285 and serine 392. 2 consecutive Calx-beta domains span residues 396–496 (VNTE…VHLS) and 527–627 (ATVT…LEIG). Residues glutamate 420, aspartate 456, aspartate 481, aspartate 482, isoleucine 484, glutamate 486, glutamate 489, aspartate 533, aspartate 534, aspartate 535, glutamate 551, aspartate 587, aspartate 613, glutamate 614, glutamate 615, and glutamate 718 each contribute to the Ca(2+) site. Residues 801–821 (WACFIVSILMIGLLTAFIGDL) form a helical membrane-spanning segment. The Extracellular segment spans residues 822 to 824 (ASH). A helical membrane pass occupies residues 825-845 (FGCTIGLKDSVTAVVFVALGT). The Alpha-2 repeat unit spans residues 842–878 (ALGTSVPDTFASKVAATQDQYADASIGNVTGSNAVNV). At 846–874 (SVPDTFASKVAATQDQYADASIGNVTGSN) the chain is on the cytoplasmic side. A helical transmembrane segment spans residues 875–895 (AVNVFLGIGVAWSIAAIYHAA). Topologically, residues 896–906 (NGEQFKVSPGT) are extracellular. A helical transmembrane segment spans residues 907–927 (LAFSVTLFTIFAFINVGVLLY). Over 928–944 (RRRPEIGGELGGPRTAK) the chain is Cytoplasmic. The chain crosses the membrane as a helical span at residues 945 to 965 (LLTSCLFVLLWLLYIFFSSLE). The Extracellular segment spans residues 966–973 (AYCHIKGF).

It belongs to the Ca(2+):cation antiporter (CaCA) (TC 2.A.19) family. SLC8 subfamily. Detected primarily in heart and at lower levels in brain. Expressed in cardiac sarcolemma, brain, kidney, liver, pancreas, skeletal muscle, placenta and lung.

Its subcellular location is the cell membrane. The enzyme catalyses Ca(2+)(in) + 3 Na(+)(out) = Ca(2+)(out) + 3 Na(+)(in). With respect to regulation, activated by micromolar levels of Ca(2+). In terms of biological role, mediates the exchange of one Ca(2+) ion against three to four Na(+) ions across the cell membrane, and thereby contributes to the regulation of cytoplasmic Ca(2+) levels and Ca(2+)-dependent cellular processes. Contributes to Ca(2+) transport during excitation-contraction coupling in muscle. In a first phase, voltage-gated channels mediate the rapid increase of cytoplasmic Ca(2+) levels due to release of Ca(2+) stores from the endoplasmic reticulum. SLC8A1 mediates the export of Ca(2+) from the cell during the next phase, so that cytoplasmic Ca(2+) levels rapidly return to baseline. Required for normal embryonic heart development and the onset of heart contractions. This chain is Sodium/calcium exchanger 1 (SLC8A1), found in Homo sapiens (Human).